The following is a 596-amino-acid chain: Ferredoxin--nitrite reductase, chloroplastic (596 aa).

The transit peptide at 1 to 28 (MASSASLQRFLPPYPHAAASRCRPPGVR) directs the protein to the chloroplast. The tract at residues 1 to 56 (MASSASLQRFLPPYPHAAASRCRPPGVRARPVQSSTVSAPSSSTPAADEAVSAERL) is disordered. Positions 31 to 47 (PVQSSTVSAPSSSTPAA) are enriched in low complexity. The [4Fe-4S] cluster site is built by Cys-474, Cys-480, Cys-515, and Cys-519. Cys-519 serves as a coordination point for siroheme.

It belongs to the nitrite and sulfite reductase 4Fe-4S domain family. In terms of assembly, monomer. It depends on siroheme as a cofactor. Requires [4Fe-4S] cluster as cofactor.

It is found in the plastid. It localises to the chloroplast. The enzyme catalyses 6 oxidized [2Fe-2S]-[ferredoxin] + NH4(+) + 2 H2O = nitrite + 6 reduced [2Fe-2S]-[ferredoxin] + 8 H(+). The protein operates within nitrogen metabolism; nitrate reduction (assimilation). Catalyzes the six-electron reduction of nitrite to ammonium. The polypeptide is Ferredoxin--nitrite reductase, chloroplastic (Oryza sativa subsp. japonica (Rice)).